The chain runs to 597 residues: Aspartate--tRNA(Asp/Asn) ligase (597 aa).

Glutamate 175 lines the L-aspartate pocket. The aspartate stretch occupies residues 199 to 202; sequence QQYK. Residues arginine 221 and histidine 454 each coordinate L-aspartate. 221–223 contributes to the ATP binding site; that stretch reads RDE. Glutamate 488 is a binding site for ATP. L-aspartate is bound at residue arginine 495. 540-543 is a binding site for ATP; the sequence is GVDR.

It belongs to the class-II aminoacyl-tRNA synthetase family. Type 1 subfamily. As to quaternary structure, homodimer.

Its subcellular location is the cytoplasm. It catalyses the reaction tRNA(Asx) + L-aspartate + ATP = L-aspartyl-tRNA(Asx) + AMP + diphosphate. Its function is as follows. Aspartyl-tRNA synthetase with relaxed tRNA specificity since it is able to aspartylate not only its cognate tRNA(Asp) but also tRNA(Asn). Reaction proceeds in two steps: L-aspartate is first activated by ATP to form Asp-AMP and then transferred to the acceptor end of tRNA(Asp/Asn). The sequence is that of Aspartate--tRNA(Asp/Asn) ligase from Bartonella quintana (strain Toulouse) (Rochalimaea quintana).